We begin with the raw amino-acid sequence, 304 residues long: Homoserine O-acetyltransferase (304 aa).

Catalysis depends on Cys-142, which acts as the Acyl-thioester intermediate. Substrate is bound by residues Lys-163 and Ser-191. Residue His-234 is the Proton acceptor of the active site. Glu-236 is a catalytic residue. Residue Arg-248 coordinates substrate.

This sequence belongs to the MetA family.

The protein localises to the cytoplasm. It catalyses the reaction L-homoserine + acetyl-CoA = O-acetyl-L-homoserine + CoA. The protein operates within amino-acid biosynthesis; L-methionine biosynthesis via de novo pathway; O-acetyl-L-homoserine from L-homoserine: step 1/1. In terms of biological role, transfers an acetyl group from acetyl-CoA to L-homoserine, forming acetyl-L-homoserine. The polypeptide is Homoserine O-acetyltransferase (Thermotoga neapolitana (strain ATCC 49049 / DSM 4359 / NBRC 107923 / NS-E)).